The sequence spans 96 residues: RxLR effector protein PITG_11507 (96 aa).

The first 19 residues, 1–19, serve as a signal peptide directing secretion; that stretch reads MRLSFIIVAVSLLAGGSGA. The segment at 27–59 is disordered; the sequence is SDVLTSRGTNEGARTGKRSLRYDSNVERTGEED. Residues 44–59 carry the RxLR-dEER motif; that stretch reads RSLRYDSNVERTGEED. The segment covering 46-55 has biased composition (basic and acidic residues); that stretch reads LRYDSNVERT.

This sequence belongs to the RxLR effector family.

Its subcellular location is the secreted. The protein localises to the host nucleus. It is found in the host cytoplasm. Its function is as follows. Effector that enhances P.infestans colonization of Nicotiana benthamiana leaves. This Phytophthora infestans (strain T30-4) (Potato late blight agent) protein is RxLR effector protein PITG_11507.